The following is a 248-amino-acid chain: Serine/arginine-rich splicing factor 1 (248 aa).

At S2 the chain carries N-acetylserine. A Phosphoserine modification is found at S2. The RRM 1 domain maps to 16–91; the sequence is CRIYVGNLPP…YRLRVEFPRS (76 aa). K30 is covalently cross-linked (Glycyl lysine isopeptide (Lys-Gly) (interchain with G-Cter in SUMO2)). K38 carries the post-translational modification N6-acetyllysine; alternate. K38 participates in a covalent cross-link: Glycyl lysine isopeptide (Lys-Gly) (interchain with G-Cter in SUMO2); alternate. A disordered region spans residues 88–134; the sequence is FPRSGRGTGRGGGGGGGGGAPRGRYGPPSRRSENRVVVSGLPPSGSW. An asymmetric dimethylarginine; alternate mark is found at R93, R97, and R109. Omega-N-methylarginine; alternate occurs at positions 93, 97, and 109. Positions 93–108 are enriched in gly residues; sequence RGTGRGGGGGGGGGAP. R111 bears the Omega-N-methylarginine mark. An RRM 2 domain is found at 121 to 195; it reads NRVVVSGLPP…ETAYIRVKVD (75 aa). Position 133 is a phosphoserine (S133). An N6-acetyllysine modification is found at K179. The interval 191 to 248 is disordered; that stretch reads RVKVDGPRSPSYGRSRSRSRSRSRNRSRSNSRSRSYSPRRSRGSPRYSPRHSRSRSRT. An interaction with SAFB1 region spans residues 198–247; it reads RSPSYGRSRSRSRSRSRNRSRSNSRSRSYSPRRSRGSPRYSPRHSRSRSR. A phosphoserine mark is found at S199 and S201. Y202 is modified (phosphotyrosine). 6 positions are modified to phosphoserine: S205, S207, S209, S231, S234, and S238. Positions 205–248 are enriched in basic residues; the sequence is SRSRSRSRSRNRSRSNSRSRSYSPRRSRGSPRYSPRHSRSRSRT.

Belongs to the splicing factor SR family. In terms of assembly, consists of two polypeptides of p32 and p33. Identified in the spliceosome C complex. Component of a ribonucleoprotein complex containing mRNAs and RNA-binding proteins including DDX5, HNRNPH2 and SRSF1 as well as splicing regulator ARVCF. In vitro, self-associates and binds SRSF2, SNRNP70 and U2AF1 but not U2AF2. Binds SREK1/SFRS12. Interacts with SAFB/SAFB1. Interacts with PSIP1/LEDGF. Interacts with RSRC1 (via Arg/Ser-rich domain). Interacts with ZRSR2/U2AF1-RS2. Interacts with CCDC55 (via C-terminus). Interacts with SRPK1 and a sliding docking interaction is essential for its sequential and processive phosphorylation by SRPK1. Interacts with NXF1. Interacts with CCNL1, CCNL2 and CDK11B. Interacts with RRP1B. Interacts (when phosphorylated in its RS domain) with TNPO3; promoting nuclear import. Interacts with ILDR1 (via C-terminus) and ILDR2. In terms of processing, phosphorylated by CLK1, CLK2, CLK3 and CLK4. Phosphorylated by SRPK1 at multiple serines in its RS domain via a directional (C-terminal to N-terminal) and a dual-track mechanism incorporating both processive phosphorylation (in which the kinase stays attached to the substrate after each round of phosphorylation) and distributive phosphorylation steps (in which the kinase and substrate dissociate after each phosphorylation event). The RS domain of SRSF1 binds to a docking groove in the large lobe of the kinase domain of SRPK1 and this induces certain structural changes in SRPK1 and/or RRM 2 domain of SRSF1, allowing RRM 2 to bind the kinase and initiate phosphorylation. The cycles continue for several phosphorylation steps in a processive manner (steps 1-8) until the last few phosphorylation steps (approximately steps 9-12). During that time, a mechanical stress induces the unfolding of the beta-4 motif in RRM 2, which then docks at the docking groove of SRPK1. This also signals RRM 2 to begin to dissociate, which facilitates SRSF1 dissociation after phosphorylation is completed. Post-translationally, asymmetrically dimethylated at arginines, probably by PRMT1, methylation promotes localization to nuclear speckles.

It localises to the cytoplasm. Its subcellular location is the nucleus speckle. Functionally, plays a role in preventing exon skipping, ensuring the accuracy of splicing and regulating alternative splicing. Interacts with other spliceosomal components, via the RS domains, to form a bridge between the 5'- and 3'-splice site binding components, U1 snRNP and U2AF. Can stimulate binding of U1 snRNP to a 5'-splice site-containing pre-mRNA. Binds to purine-rich RNA sequences, either the octamer, 5'-RGAAGAAC-3' (r=A or G) or the decamers, AGGACAGAGC/AGGACGAAGC. Binds preferentially to the 5'-CGAGGCG-3' motif in vitro. Three copies of the octamer constitute a powerful splicing enhancer in vitro, the ASF/SF2 splicing enhancer (ASE) which can specifically activate ASE-dependent splicing. May function as export adapter involved in mRNA nuclear export through the TAP/NXF1 pathway. The chain is Serine/arginine-rich splicing factor 1 (SRSF1) from Pongo abelii (Sumatran orangutan).